We begin with the raw amino-acid sequence, 205 residues long: Protein TON_1965 (205 aa).

One can recognise an AMMECR1 domain in the interval 7-201 (EWGEFLVRLA…EEYPKGPVKR (195 aa)).

The polypeptide is Protein TON_1965 (Thermococcus onnurineus (strain NA1)).